A 119-amino-acid polypeptide reads, in one-letter code: MPRVKRGVTARARHKKVLKLAKGYYGARSRTYRVAVQAVTKAGQYAYRDRRQKKRQFRQLWIARINAASRQNGLSYSRFINGLKKASIEIDRKILADIAVFDKVVFATLVEKAKDALAK.

Belongs to the bacterial ribosomal protein bL20 family.

In terms of biological role, binds directly to 23S ribosomal RNA and is necessary for the in vitro assembly process of the 50S ribosomal subunit. It is not involved in the protein synthesizing functions of that subunit. This chain is Large ribosomal subunit protein bL20, found in Shewanella halifaxensis (strain HAW-EB4).